The sequence spans 251 residues: Fibroblast growth factor 23 (251 aa).

The first 24 residues, 1–24 (MLGTCLRLLVGVLCTVCSLGTARA), serve as a signal peptide directing secretion. A disulfide bond links C95 and C113. O-linked (GalNAc) threonine glycosylation is found at T171 and T178. Residues 175–251 (RRHTRSAEDP…DRCRPFPRFV (77 aa)) are disordered. A compositionally biased stretch (basic and acidic residues) spans 179 to 189 (RSAEDPPERDP). The residue at position 180 (S180) is a Phosphoserine; by FAM20C.

It belongs to the heparin-binding growth factors family. In terms of assembly, interacts with FGFR1. Interacts with FGFR2, FGFR3 and FGFR4. Affinity between fibroblast growth factors (FGFs) and their receptors is increased by KL and heparan sulfate glycosaminoglycans that function as coreceptors. Post-translationally, following secretion this protein is inactivated by cleavage into a N-terminal fragment and a C-terminal fragment. The processing is effected by proprotein convertases. In terms of processing, O-glycosylated at Thr-171 and Thr-178 by GALNT3 and glycosylation of Thr-178 requires previous glycosylation at Thr171. Glycosylation is necessary for secretion; it blocks processing by proprotein convertases when the O-glycan is alpha 2,6-sialylated. Competition between proprotein convertase cleavage and block of cleavage by O-glycosylation determines the level of secreted active FGF23. Phosphorylation at Ser-180 mediated by FAM20C slows down glycosylation at Thr-178 notably. In terms of tissue distribution, mainly expressed in the brain and thymus at low levels. In brain; preferentially expressed in the ventrolateral thalamic nucleus.

It is found in the secreted. Functionally, regulator of phosphate homeostasis. Inhibits renal tubular phosphate transport by reducing SLC34A1 levels. Acts directly on the parathyroid to decrease PTH secretion. Regulator of vitamin-D metabolism. Negatively regulates osteoblasts differentiation and matrix mineralization. Up-regulates EGR1 expression in the presence of KL. The chain is Fibroblast growth factor 23 (Fgf23) from Mus musculus (Mouse).